The following is a 261-amino-acid chain: uncharacterized protein (261 aa).

22-46 (IVTGGNSGLGQAFAMALAKAGANIF) is a binding site for NADP(+). A substrate-binding site is contributed by Ser-153. Tyr-166 functions as the Proton acceptor in the catalytic mechanism.

The protein belongs to the short-chain dehydrogenases/reductases (SDR) family.

This is an uncharacterized protein from Escherichia coli (strain K12).